Reading from the N-terminus, the 239-residue chain is Carboxy-S-adenosyl-L-methionine synthase (239 aa).

S-adenosyl-L-methionine is bound by residues Tyr35, 64–66, 88–89, and Arg195; these read GCS and DN.

The protein belongs to the class I-like SAM-binding methyltransferase superfamily. Cx-SAM synthase family. Homodimer.

The enzyme catalyses prephenate + S-adenosyl-L-methionine = carboxy-S-adenosyl-L-methionine + 3-phenylpyruvate + H2O. Functionally, catalyzes the conversion of S-adenosyl-L-methionine (SAM) to carboxy-S-adenosyl-L-methionine (Cx-SAM). The chain is Carboxy-S-adenosyl-L-methionine synthase from Helicobacter pylori (strain Shi470).